The chain runs to 220 residues: LOB domain-containing protein 31 (220 aa).

Positions 10–112 constitute an LOB domain; sequence GPCGACKFLR…AELAYVQTQL (103 aa). Residues 117–172 are disordered; that stretch reads GLPPPNSQNNSRTEAASSSNVPLISSVDSKDNMSSSSSHIPCMSQQQEQEQPKEAI. Over residues 123–139 the composition is skewed to polar residues; sequence SQNNSRTEAASSSNVPL.

Belongs to the LOB domain-containing protein family. In terms of tissue distribution, expressed in roots, stems and flowers.

The chain is LOB domain-containing protein 31 (LBD31) from Arabidopsis thaliana (Mouse-ear cress).